Here is a 155-residue protein sequence, read N- to C-terminus: Transcriptional repressor NrdR (155 aa).

A zinc finger lies at 3–34 (CPFCGHSSTQVLDSRVSEDGDTVRRRRRCEAC). The region spanning 49-139 (PAIVKKNGSR…VYRSFEDVSE (91 aa)) is the ATP-cone domain.

Belongs to the NrdR family. The cofactor is Zn(2+).

Negatively regulates transcription of bacterial ribonucleotide reductase nrd genes and operons by binding to NrdR-boxes. This Cupriavidus metallidurans (strain ATCC 43123 / DSM 2839 / NBRC 102507 / CH34) (Ralstonia metallidurans) protein is Transcriptional repressor NrdR.